The primary structure comprises 49 residues: Large ribosomal subunit protein bL33A (49 aa).

The protein belongs to the bacterial ribosomal protein bL33 family.

The sequence is that of Large ribosomal subunit protein bL33A from Levilactobacillus brevis (strain ATCC 367 / BCRC 12310 / CIP 105137 / JCM 1170 / LMG 11437 / NCIMB 947 / NCTC 947) (Lactobacillus brevis).